Consider the following 860-residue polypeptide: Leucine--tRNA ligase (860 aa).

The short motif at 42 to 52 (PYPSGRLHMGH) is the 'HIGH' region element. Residues 619–623 (KMSKS) carry the 'KMSKS' region motif. Lys-622 contacts ATP.

The protein belongs to the class-I aminoacyl-tRNA synthetase family.

It is found in the cytoplasm. The enzyme catalyses tRNA(Leu) + L-leucine + ATP = L-leucyl-tRNA(Leu) + AMP + diphosphate. In Edwardsiella ictaluri (strain 93-146), this protein is Leucine--tRNA ligase.